The primary structure comprises 336 residues: MFYSCLKKILFQLDPEHSHEFTFRHLKRITGTPLQFLISQSVPTKSVDCMGLSFKNPLGLAAGLDKNGDCIDVLGAMGFGFIEVGTVTPLPQQGNQKPRLFRVTEAEALINRMGFNNLGVDYLINNIKRSRFGGVLGINIGKNKETPLEVSKEDYLICMDKVYPYAGYIAVNISSPNTEKLRQLQYGDLLEDMLTSVKKKQTQLHEQHDRYVPVAVKISPDLSEEELIKLADAFLKHEIDGVIATNTTLDHSLIQGLNHCQQSGGLSGRPLQPSSNETIRLLSKELKGRIPIIGVGGIDSLMAAREKIAAGASLLQLYSGLIFQGPALIKKIIHHI.

Residues A62–K66 and T86 contribute to the FMN site. K66 serves as a coordination point for substrate. Position 111-115 (N111–F115) interacts with substrate. FMN-binding residues include N139 and N172. Residue N172 coordinates substrate. Catalysis depends on S175, which acts as the Nucleophile. N177 provides a ligand contact to substrate. FMN contacts are provided by K217 and T245. N246 to T247 provides a ligand contact to substrate. FMN contacts are provided by residues G268, G297, and Y318 to S319.

This sequence belongs to the dihydroorotate dehydrogenase family. Type 2 subfamily. As to quaternary structure, monomer. It depends on FMN as a cofactor.

It localises to the cell membrane. The enzyme catalyses (S)-dihydroorotate + a quinone = orotate + a quinol. It functions in the pathway pyrimidine metabolism; UMP biosynthesis via de novo pathway; orotate from (S)-dihydroorotate (quinone route): step 1/1. Its function is as follows. Catalyzes the conversion of dihydroorotate to orotate with quinone as electron acceptor. The chain is Dihydroorotate dehydrogenase (quinone) from Hamiltonella defensa subsp. Acyrthosiphon pisum (strain 5AT).